Consider the following 417-residue polypeptide: Gamma-glutamyl phosphate reductase (417 aa).

Belongs to the gamma-glutamyl phosphate reductase family.

The protein resides in the cytoplasm. The catalysed reaction is L-glutamate 5-semialdehyde + phosphate + NADP(+) = L-glutamyl 5-phosphate + NADPH + H(+). The protein operates within amino-acid biosynthesis; L-proline biosynthesis; L-glutamate 5-semialdehyde from L-glutamate: step 2/2. Its function is as follows. Catalyzes the NADPH-dependent reduction of L-glutamate 5-phosphate into L-glutamate 5-semialdehyde and phosphate. The product spontaneously undergoes cyclization to form 1-pyrroline-5-carboxylate. This is Gamma-glutamyl phosphate reductase from Legionella pneumophila (strain Corby).